The sequence spans 42 residues: Photosystem II reaction center protein J (42 aa).

The helical transmembrane segment at Ile10–Phe30 threads the bilayer.

Belongs to the PsbJ family. As to quaternary structure, PSII is composed of 1 copy each of membrane proteins PsbA, PsbB, PsbC, PsbD, PsbE, PsbF, PsbH, PsbI, PsbJ, PsbK, PsbL, PsbM, PsbT, PsbX, PsbY, PsbZ, Psb30/Ycf12, at least 3 peripheral proteins of the oxygen-evolving complex and a large number of cofactors. It forms dimeric complexes.

The protein resides in the plastid. Its subcellular location is the chloroplast thylakoid membrane. One of the components of the core complex of photosystem II (PSII). PSII is a light-driven water:plastoquinone oxidoreductase that uses light energy to abstract electrons from H(2)O, generating O(2) and a proton gradient subsequently used for ATP formation. It consists of a core antenna complex that captures photons, and an electron transfer chain that converts photonic excitation into a charge separation. This chain is Photosystem II reaction center protein J, found in Staurastrum punctulatum (Green alga).